Here is a 150-residue protein sequence, read N- to C-terminus: Large ribosomal subunit protein bL9 (150 aa).

It belongs to the bacterial ribosomal protein bL9 family.

Its function is as follows. Binds to the 23S rRNA. The chain is Large ribosomal subunit protein bL9 from Vibrio parahaemolyticus serotype O3:K6 (strain RIMD 2210633).